We begin with the raw amino-acid sequence, 113 residues long: Large ribosomal subunit protein eL34 (113 aa).

This sequence belongs to the eukaryotic ribosomal protein eL34 family.

The sequence is that of Large ribosomal subunit protein eL34 from Methanopyrus kandleri (strain AV19 / DSM 6324 / JCM 9639 / NBRC 100938).